We begin with the raw amino-acid sequence, 207 residues long: Large ribosomal subunit protein uL4 (207 aa).

A disordered region spans residues 55 to 75 (SAVRGGGRKPWRQKGTGRARQ). Positions 60 to 71 (GGRKPWRQKGTG) are enriched in basic residues.

Belongs to the universal ribosomal protein uL4 family. Part of the 50S ribosomal subunit.

In terms of biological role, one of the primary rRNA binding proteins, this protein initially binds near the 5'-end of the 23S rRNA. It is important during the early stages of 50S assembly. It makes multiple contacts with different domains of the 23S rRNA in the assembled 50S subunit and ribosome. Forms part of the polypeptide exit tunnel. This chain is Large ribosomal subunit protein uL4, found in Staphylococcus epidermidis (strain ATCC 35984 / DSM 28319 / BCRC 17069 / CCUG 31568 / BM 3577 / RP62A).